A 376-amino-acid polypeptide reads, in one-letter code: Cytochrome b-c1 complex subunit 2, mitochondrial (376 aa).

The transit peptide at M1 to S16 directs the protein to the mitochondrion.

The protein belongs to the peptidase M16 family. UQCRC2/QCR2 subfamily. In terms of assembly, component of the ubiquinol-cytochrome c oxidoreductase (cytochrome b-c1 complex, complex III, CIII), a multisubunit enzyme composed of 3 respiratory subunits cytochrome b, cytochrome c1 and Rieske protein, 2 core protein subunits, and additional low-molecular weight protein subunits. The complex exists as an obligatory dimer and forms supercomplexes (SCs) in the inner mitochondrial membrane with cytochrome c oxidase (complex IV, CIV).

Its subcellular location is the mitochondrion inner membrane. Component of the ubiquinol-cytochrome c oxidoreductase, a multisubunit transmembrane complex that is part of the mitochondrial electron transport chain which drives oxidative phosphorylation. The respiratory chain contains 3 multisubunit complexes succinate dehydrogenase (complex II, CII), ubiquinol-cytochrome c oxidoreductase (cytochrome b-c1 complex, complex III, CIII) and cytochrome c oxidase (complex IV, CIV), that cooperate to transfer electrons derived from NADH and succinate to molecular oxygen, creating an electrochemical gradient over the inner membrane that drives transmembrane transport and the ATP synthase. The cytochrome b-c1 complex catalyzes electron transfer from ubiquinol to cytochrome c, linking this redox reaction to translocation of protons across the mitochondrial inner membrane, with protons being carried across the membrane as hydrogens on the quinol. In the process called Q cycle, 2 protons are consumed from the matrix, 4 protons are released into the intermembrane space and 2 electrons are passed to cytochrome c. The protein is Cytochrome b-c1 complex subunit 2, mitochondrial (QCR2) of Debaryomyces hansenii (strain ATCC 36239 / CBS 767 / BCRC 21394 / JCM 1990 / NBRC 0083 / IGC 2968) (Yeast).